Reading from the N-terminus, the 234-residue chain is Phosphoribosylformylglycinamidine synthase subunit PurQ (234 aa).

The Glutamine amidotransferase type-1 domain occupies Arg-4–Ala-234. Cys-87 (nucleophile) is an active-site residue. Residues His-204 and Glu-206 contribute to the active site.

As to quaternary structure, part of the FGAM synthase complex composed of 1 PurL, 1 PurQ and 2 PurS subunits.

Its subcellular location is the cytoplasm. The enzyme catalyses N(2)-formyl-N(1)-(5-phospho-beta-D-ribosyl)glycinamide + L-glutamine + ATP + H2O = 2-formamido-N(1)-(5-O-phospho-beta-D-ribosyl)acetamidine + L-glutamate + ADP + phosphate + H(+). It catalyses the reaction L-glutamine + H2O = L-glutamate + NH4(+). The protein operates within purine metabolism; IMP biosynthesis via de novo pathway; 5-amino-1-(5-phospho-D-ribosyl)imidazole from N(2)-formyl-N(1)-(5-phospho-D-ribosyl)glycinamide: step 1/2. In terms of biological role, part of the phosphoribosylformylglycinamidine synthase complex involved in the purines biosynthetic pathway. Catalyzes the ATP-dependent conversion of formylglycinamide ribonucleotide (FGAR) and glutamine to yield formylglycinamidine ribonucleotide (FGAM) and glutamate. The FGAM synthase complex is composed of three subunits. PurQ produces an ammonia molecule by converting glutamine to glutamate. PurL transfers the ammonia molecule to FGAR to form FGAM in an ATP-dependent manner. PurS interacts with PurQ and PurL and is thought to assist in the transfer of the ammonia molecule from PurQ to PurL. The polypeptide is Phosphoribosylformylglycinamidine synthase subunit PurQ (Streptomyces avermitilis (strain ATCC 31267 / DSM 46492 / JCM 5070 / NBRC 14893 / NCIMB 12804 / NRRL 8165 / MA-4680)).